A 235-amino-acid chain; its full sequence is Elongation factor Tu (235 aa).

One can recognise a tr-type G domain in the interval 1–125 (KNMITGAAQM…EVDEYIPTPE (125 aa)). GTP is bound at residue 47 to 50 (NKED).

The protein belongs to the TRAFAC class translation factor GTPase superfamily. Classic translation factor GTPase family. EF-Tu/EF-1A subfamily. As to quaternary structure, monomer.

It is found in the cytoplasm. It catalyses the reaction GTP + H2O = GDP + phosphate + H(+). Its function is as follows. GTP hydrolase that promotes the GTP-dependent binding of aminoacyl-tRNA to the A-site of ribosomes during protein biosynthesis. In Gloeothece membranacea (strain PCC 6501 / SAG 26.84), this protein is Elongation factor Tu (tufA).